A 773-amino-acid polypeptide reads, in one-letter code: Protein FAM149A (773 aa).

2 stretches are compositionally biased toward low complexity: residues 18 to 37 (TSTA…AAAA) and 54 to 90 (LLRA…AAGA). Disordered regions lie at residues 18-155 (TSTA…RELG), 173-210 (DIGE…DSLP), 232-264 (FSSS…TERG), and 568-613 (TQNE…PWRL). Over residues 174 to 186 (IGEEGASDGDSGD) the composition is skewed to acidic residues. Positions 245 to 264 (TSWSGSATQSSTTGSSTERG) are enriched in low complexity.

This sequence belongs to the FAM149 family.

This is Protein FAM149A (FAM149A) from Homo sapiens (Human).